The primary structure comprises 506 residues: Glutamate--tRNA ligase (506 aa).

Positions 9–19 (PSPTGFQHIGG) match the 'HIGH' region motif. A 'KMSKS' region motif is present at residues 251–255 (KLSKR). Lysine 254 contacts ATP.

The protein belongs to the class-I aminoacyl-tRNA synthetase family. Glutamate--tRNA ligase type 1 subfamily. Monomer.

Its subcellular location is the cytoplasm. The catalysed reaction is tRNA(Glu) + L-glutamate + ATP = L-glutamyl-tRNA(Glu) + AMP + diphosphate. In terms of biological role, catalyzes the attachment of glutamate to tRNA(Glu) in a two-step reaction: glutamate is first activated by ATP to form Glu-AMP and then transferred to the acceptor end of tRNA(Glu). This Treponema denticola (strain ATCC 35405 / DSM 14222 / CIP 103919 / JCM 8153 / KCTC 15104) protein is Glutamate--tRNA ligase.